A 355-amino-acid polypeptide reads, in one-letter code: Alanine racemase (355 aa).

Lysine 34 serves as the catalytic Proton acceptor; specific for D-alanine. Position 34 is an N6-(pyridoxal phosphate)lysine (lysine 34). Arginine 133 contributes to the substrate binding site. Tyrosine 249 functions as the Proton acceptor; specific for L-alanine in the catalytic mechanism. Substrate is bound at residue methionine 297.

This sequence belongs to the alanine racemase family. Requires pyridoxal 5'-phosphate as cofactor.

It carries out the reaction L-alanine = D-alanine. The protein operates within amino-acid biosynthesis; D-alanine biosynthesis; D-alanine from L-alanine: step 1/1. Catalyzes the interconversion of L-alanine and D-alanine. May also act on other amino acids. This is Alanine racemase (alr) from Rickettsia conorii (strain ATCC VR-613 / Malish 7).